Reading from the N-terminus, the 280-residue chain is Protein FAM131C (280 aa).

The disordered stretch occupies residues Gln195 to Asn280. Positions Ser197–Phe211 are enriched in polar residues. The segment covering Ser215–Pro227 has biased composition (pro residues).

The protein belongs to the FAM131 family.

The sequence is that of Protein FAM131C (FAM131C) from Homo sapiens (Human).